The sequence spans 53 residues: uncharacterized protein (53 aa).

Residues 14–33 (SPSSLNNNNNINSKSLQINS) are compositionally biased toward low complexity. A disordered region spans residues 14–53 (SPSSLNNNNNINSKSLQINSENKSKIQNNNPLGNKGGVQF).

This is an uncharacterized protein from Dictyostelium discoideum (Social amoeba).